We begin with the raw amino-acid sequence, 89 residues long: Large ribosomal subunit protein eL34 (89 aa).

A disordered region spans residues 1–22 (MPAPRYKSGSSKKVYRKAPGNS).

It belongs to the eukaryotic ribosomal protein eL34 family.

The chain is Large ribosomal subunit protein eL34 from Methanococcus maripaludis (strain C7 / ATCC BAA-1331).